The chain runs to 148 residues: 3-hydroxyacyl-[acyl-carrier-protein] dehydratase FabZ (148 aa).

Histidine 55 is an active-site residue.

It belongs to the thioester dehydratase family. FabZ subfamily.

It is found in the cytoplasm. It carries out the reaction a (3R)-hydroxyacyl-[ACP] = a (2E)-enoyl-[ACP] + H2O. In terms of biological role, involved in unsaturated fatty acids biosynthesis. Catalyzes the dehydration of short chain beta-hydroxyacyl-ACPs and long chain saturated and unsaturated beta-hydroxyacyl-ACPs. The chain is 3-hydroxyacyl-[acyl-carrier-protein] dehydratase FabZ from Haemophilus influenzae (strain ATCC 51907 / DSM 11121 / KW20 / Rd).